Consider the following 2093-residue polypeptide: Nuclear-pore anchor (2093 aa).

4 coiled-coil regions span residues 57 to 362, 439 to 529, 570 to 627, and 688 to 1172; these read LEQK…TDEL, MILQ…RDVQ, DING…RAEE, and QEKA…LEAK. Residues 1175–1198 form a disordered region; that stretch reads NSAEKNSRSGTISSGSTDSDHLED. A compositionally biased stretch (low complexity) spans 1182–1191; the sequence is RSGTISSGST. Coiled-coil stretches lie at residues 1208–1252 and 1293–1585; these read LRRT…AERA and EKCQ…LKHA. Disordered stretches follow at residues 1453–1489, 1525–1555, and 1627–2093; these read YEKE…AVVE, KKDE…KKEK, and SNSQ…PSPP. Residues 1470-1483 show a composition bias toward basic and acidic residues; it reads QLEEAKEEAGKRTT. Positions 1652–1674 are enriched in polar residues; that stretch reads STMTRVPSSTPLIKSPVATTQQL. 2 stretches are compositionally biased toward basic and acidic residues: residues 1710–1719 and 1729–1740; these read KPEESPKVDV and DEGKQPAAHEPE. Polar residues predominate over residues 1764-1779; the sequence is SEPQQDSLTQGETSSE. Basic and acidic residues predominate over residues 1789-1808; that stretch reads KGSESHPDTSEGENLAKEPA. The stretch at 1818–1849 forms a coiled coil; that stretch reads TTDGDNEETEAENAEEKTEEYVEAQQDNEADE. Acidic residues-rich tracts occupy residues 1821 to 1830 and 1838 to 1903; these read GDNEETEAEN and YVEA…EEGT. Positions 1921-1931 are enriched in polar residues; that stretch reads TLATPTQSPSR. Acidic residues predominate over residues 1935 to 1963; sequence AMEEAETTIETPVEDDKTDEGGDAAEEAA. The span at 1984-2009 shows a compositional bias: low complexity; the sequence is TSAATTSPVSTAPTTSSTLASAITSS. Position 2022 is a phosphoserine (Ser-2022).

As to quaternary structure, part of the nuclear pore complex (NPC). The NPC has an eight-fold symmetrical structure comprising a central transport channel and two rings, the cytoplasmic and nuclear rings, to which eight filaments are attached. The cytoplasmic filaments have loose ends, while the nuclear filaments are joined in a distal ring, forming a nuclear basket. NPCs are highly dynamic in configuration and composition, and can be devided in 3 subcomplexes, the NUP62 subcomplex, the NUP107-160 subcomplex and the NUP93 subcomplex, containing approximately 30 different nucleoporin proteins. Interacts with MAD1 and (via N-terminus) with ESD4. As to expression, ubiquitous. Highest expression in the shoot apical region.

Its subcellular location is the nucleus envelope. It is found in the nucleus membrane. It localises to the nucleus. The protein localises to the nuclear pore complex. Its function is as follows. Component of the nuclear pore complex. Acts as a docking site for activities required for desumoylation and mRNA export. Required for the proper expression or localization of a subset of miRNAs. Plays a role in meristematic cell division by interacting with spindle assembly checkpoint proteins. This is Nuclear-pore anchor from Arabidopsis thaliana (Mouse-ear cress).